The following is a 425-amino-acid chain: Histone-binding protein RBBP7 (425 aa).

WD repeat units lie at residues 47–122 (QWLP…KINH), 128–173 (RARY…LRLR), 181–217 (GLSW…KVVD), 228–269 (VVED…HSVD), 275–312 (VNCL…LHSF), 318–369 (EIFQ…LFIH), and 376–403 (ISDF…IWQM).

Belongs to the WD repeat RBAP46/RBAP48/MSI1 family. Binds directly to helix 1 of the histone fold of histone H4, a region that is not accessible when H4 is in chromatin.

The protein localises to the nucleus. Core histone-binding subunit that may target chromatin remodeling factors, histone acetyltransferases and histone deacetylases to their histone substrates in a manner that is regulated by nucleosomal DNA. Component of several complexes which regulate chromatin metabolism. The chain is Histone-binding protein RBBP7 (rbbp7) from Xenopus laevis (African clawed frog).